We begin with the raw amino-acid sequence, 344 residues long: Putative glycosyltransferase EpsH (344 aa).

This sequence belongs to the glycosyltransferase 2 family.

Functionally, may be involved in the production of the exopolysaccharide (EPS) component of the extracellular matrix during biofilm formation. EPS is responsible for the adhesion of chains of cells into bundles. Required for biofilm maintenance. The protein is Putative glycosyltransferase EpsH (epsH) of Bacillus subtilis (strain 168).